Reading from the N-terminus, the 301-residue chain is Probable aspartoacylase (301 aa).

Residues His-13 and Glu-16 each coordinate Zn(2+). Substrate contacts are provided by residues Arg-54 and 61–62 (NR). Position 105 (His-105) interacts with Zn(2+). Substrate is bound by residues Glu-163 and Tyr-273.

The protein belongs to the AspA/AstE family. Aspartoacylase subfamily. The cofactor is Zn(2+).

It catalyses the reaction an N-acyl-L-aspartate + H2O = a carboxylate + L-aspartate. The sequence is that of Probable aspartoacylase from Prochlorococcus marinus (strain MIT 9312).